Here is a 454-residue protein sequence, read N- to C-terminus: uncharacterized protein (454 aa).

The N-terminal stretch at 1–18 (MRRFTLFVFFLSISIAYA) is a signal peptide.

This is an uncharacterized protein from Caenorhabditis elegans.